Reading from the N-terminus, the 258-residue chain is MQDWDPDLYRQFEAERTRPATDLLAHITITSPQFISDLGCGPGNSTELLHRRFPDAQLVGIDHSQAMLASAQQRLPHCTFVEADIHQWHPSQPQNLIYANASLQWLTDHPHLFPSLLSQLAPKGVLAVQMPDNLDQPSHRAMREVAENGPWQQTLQEAGATRAKVLSANHYYDLLAPHAERVDIWRTTYYHPMPSAQAIVDWLRATGLRPYLAPLTEAMQLAFLQNYLAIIDKAYPARTDGRRLLAFPRLFIVAHAQR.

This sequence belongs to the methyltransferase superfamily. Tam family.

It is found in the cytoplasm. It catalyses the reaction trans-aconitate + S-adenosyl-L-methionine = (E)-3-(methoxycarbonyl)pent-2-enedioate + S-adenosyl-L-homocysteine. In terms of biological role, catalyzes the S-adenosylmethionine monomethyl esterification of trans-aconitate. This chain is Trans-aconitate 2-methyltransferase, found in Yersinia pseudotuberculosis serotype O:1b (strain IP 31758).